The following is a 59-amino-acid chain: Large ribosomal subunit protein uL30 (59 aa).

The protein belongs to the universal ribosomal protein uL30 family. Part of the 50S ribosomal subunit.

The protein is Large ribosomal subunit protein uL30 of Erwinia tasmaniensis (strain DSM 17950 / CFBP 7177 / CIP 109463 / NCPPB 4357 / Et1/99).